We begin with the raw amino-acid sequence, 79 residues long: M-myrmicitoxin(01)-Tb1a (79 aa).

Residues 1-26 form the signal peptide; that stretch reads MKLSFLSLVLAIILVMALMYTPHAEA. A propeptide spanning residues 27–56 is cleaved from the precursor; sequence KAWADADADATAAADADADAVADALADAVA. Val-76 is subject to Valine amide.

It belongs to the formicidae venom precursor-01 superfamily. In terms of processing, the C-terminal amidation is important for antimicrobial activity, since a non-amidated synthetic peptide shows a reduced antimicrobial activity (2-20-fold depending on the strain tested). The amidation may play a positive role in the peptide conformation, since amidated peptide shows an increase of about 5% of helical content. In terms of tissue distribution, expressed by the venom gland.

Its subcellular location is the secreted. It is found in the target cell membrane. Functionally, antimicrobial peptide that shows antimicrobial activities against all microorganisms tested with minimal inhibitory concentrations (MICs) values ranging from 0.45 to 97.5 umol/L. This peptide kills the microorganisms by permeabilizating the membranes. It shows a very weak hemolytic activity (HC(50)=325 umol/L) and weak cytotoxicity against human lymphocytes (LC(50)=67.8 umol/L). Gram-negative bacteria tested are E.coli (MIC=24.4 umol/L), C.sakazakii (MIC=5.8 umol/L), P.aeruginosa (MIC=8.7-12.2 umol/L), S.enterica (MIC=5.4 umol/L), and H.pylori (MIC=0.99-3.9 umol/L). Gram-positive bacteria tested are E.hirae (MIC=12.2 umol/L), S.aureus (MIC=3.0-6.4 umol/L), methicillin-resistant S.aureus (MRSA) (MIC=8.7 umol/L), S.xylosus (MIC=0.45-1.3 umol/L), and B.subtilis (MIC=24.4 umol/L). Fungi tested are A.niger (MIC=0.75 umol/L), C.albicans (MIC=17.3 umol/L), G.candidum (MIC=97.5 umol/L), and S.cerevisiae (MIC=6.1 umol/L). Finally the parasite tested is L.infantum (MIC=1.5 umol/L). This chain is M-myrmicitoxin(01)-Tb1a, found in Tetramorium bicarinatum (Tramp ant).